The sequence spans 323 residues: uncharacterized protein (323 aa).

Transmembrane regions (helical) follow at residues Phe8–Glu28, Leu32–Leu52, and Ile92–Phe112.

It is found in the mitochondrion membrane. This is an uncharacterized protein from Neurospora crassa (strain ATCC 24698 / 74-OR23-1A / CBS 708.71 / DSM 1257 / FGSC 987).